The chain runs to 299 residues: 4-diphosphocytidyl-2-C-methyl-D-erythritol kinase (299 aa).

The active site involves lysine 22. Proline 108–serine 118 is an ATP binding site. Residue aspartate 150 is part of the active site.

This sequence belongs to the GHMP kinase family. IspE subfamily.

The catalysed reaction is 4-CDP-2-C-methyl-D-erythritol + ATP = 4-CDP-2-C-methyl-D-erythritol 2-phosphate + ADP + H(+). It functions in the pathway isoprenoid biosynthesis; isopentenyl diphosphate biosynthesis via DXP pathway; isopentenyl diphosphate from 1-deoxy-D-xylulose 5-phosphate: step 3/6. Functionally, catalyzes the phosphorylation of the position 2 hydroxy group of 4-diphosphocytidyl-2C-methyl-D-erythritol. This is 4-diphosphocytidyl-2-C-methyl-D-erythritol kinase from Desulfotalea psychrophila (strain LSv54 / DSM 12343).